Reading from the N-terminus, the 723-residue chain is Epidermal growth factor receptor kinase substrate 8-like protein 1 (723 aa).

Positions 35–164 (QYPVNHLVTF…LHNYRSGRGE (130 aa)) constitute a PTB domain. Basic and acidic residues predominate over residues 162-183 (RGERRAAALRATQEELQRDRSP). Disordered stretches follow at residues 162 to 247 (RGER…PRGP), 442 to 477 (KQLQ…LESE), 537 to 589 (GPRL…GLDP), and 609 to 636 (LAQG…GSDA). S182 carries the phosphoserine modification. The residue at position 187 (T187) is a Phosphothreonine. The 60-residue stretch at 478 to 537 (TAGKWVLCNYDFQARNSSELSVKQRDVLEVLDDSRKWWKVRDPAGQEGYVPYNILTPYPG) folds into the SH3 domain. A compositionally biased stretch (polar residues) spans 543-552 (SQSPARSLNS). Pro residues predominate over residues 553 to 568 (TPPPPPAPAPAPPPAL). The span at 571–580 (PRWDRPRWDS) shows a compositional bias: basic and acidic residues. Positions 689–719 (VQRSLLEDKEKVSELEAVMEKQKKKVEGEVE) form a coiled coil.

The protein belongs to the EPS8 family. Interacts with ABI1. Part of a complex that contains SOS1, ABI1 and EPS8L2. Associates with F-actin. Detected in placenta.

Its subcellular location is the cytoplasm. Functionally, stimulates guanine exchange activity of SOS1. May play a role in membrane ruffling and remodeling of the actin cytoskeleton. This is Epidermal growth factor receptor kinase substrate 8-like protein 1 (EPS8L1) from Homo sapiens (Human).